The primary structure comprises 484 residues: Cathepsin F (484 aa).

An N-terminal signal peptide occupies residues 1 to 19 (MAPWLQLLSLLGLLPGAVA). A propeptide spans 20–270 (APAQPRAASF…MKQAKSVGDL (251 aa)) (activation peptide). N-linked (GlcNAc...) asparagine glycosylation is found at Asn-160 and Asn-195. Disulfide bonds link Cys-292/Cys-333 and Cys-326/Cys-366. Residue Cys-295 is part of the active site. Residues Asn-367 and Asn-378 are each glycosylated (N-linked (GlcNAc...) asparagine). A disulfide bridge connects residues Cys-424 and Cys-472. The active site involves His-431. Asn-440 carries an N-linked (GlcNAc...) asparagine glycan. Residue Asn-451 is part of the active site.

The protein belongs to the peptidase C1 family. In terms of tissue distribution, high expression levels in heart, skeletal muscle, brain, testis and ovary; moderate levels in prostate, placenta, liver and colon; and no detectable expression in peripheral leukocytes and thymus.

The protein resides in the lysosome. The enzyme catalyses The recombinant enzyme cleaves synthetic substrates with Phe and Leu (better than Val) in P2, with high specificity constant (kcat/Km) comparable to that of cathepsin L.. Thiol protease which is believed to participate in intracellular degradation and turnover of proteins. Has also been implicated in tumor invasion and metastasis. In Homo sapiens (Human), this protein is Cathepsin F (CTSF).